Consider the following 219-residue polypeptide: Virginiamycin A acetyltransferase (219 aa).

Residue His-87 is part of the active site.

This sequence belongs to the transferase hexapeptide repeat family.

Its function is as follows. Inactivates the A compounds of virginiamycin-like antibiotics, thus providing resistance to these antibiotics. In Staphylococcus aureus, this protein is Virginiamycin A acetyltransferase (vat).